Here is a 318-residue protein sequence, read N- to C-terminus: Homoserine kinase (318 aa).

Residue 97–107 (PIGSGLGSSAC) participates in ATP binding.

It belongs to the GHMP kinase family. Homoserine kinase subfamily.

It is found in the cytoplasm. The enzyme catalyses L-homoserine + ATP = O-phospho-L-homoserine + ADP + H(+). Its pathway is amino-acid biosynthesis; L-threonine biosynthesis; L-threonine from L-aspartate: step 4/5. Functionally, catalyzes the ATP-dependent phosphorylation of L-homoserine to L-homoserine phosphate. The chain is Homoserine kinase from Vibrio atlanticus (strain LGP32) (Vibrio splendidus (strain Mel32)).